The chain runs to 252 residues: 3-deoxy-manno-octulosonate cytidylyltransferase (252 aa).

It belongs to the KdsB family.

It is found in the cytoplasm. The enzyme catalyses 3-deoxy-alpha-D-manno-oct-2-ulosonate + CTP = CMP-3-deoxy-beta-D-manno-octulosonate + diphosphate. It functions in the pathway nucleotide-sugar biosynthesis; CMP-3-deoxy-D-manno-octulosonate biosynthesis; CMP-3-deoxy-D-manno-octulosonate from 3-deoxy-D-manno-octulosonate and CTP: step 1/1. It participates in bacterial outer membrane biogenesis; lipopolysaccharide biosynthesis. Its function is as follows. Activates KDO (a required 8-carbon sugar) for incorporation into bacterial lipopolysaccharide in Gram-negative bacteria. This chain is 3-deoxy-manno-octulosonate cytidylyltransferase, found in Nitratidesulfovibrio vulgaris (strain DP4) (Desulfovibrio vulgaris).